The chain runs to 331 residues: Glycerol-3-phosphate dehydrogenase [NAD(P)+] (331 aa).

Positions 11, 30, and 105 each coordinate NADPH. Positions 105, 134, and 136 each coordinate sn-glycerol 3-phosphate. Position 138 (Ala-138) interacts with NADPH. The sn-glycerol 3-phosphate site is built by Lys-189, Asp-242, Ser-252, Arg-253, and Asn-254. Lys-189 (proton acceptor) is an active-site residue. Arg-253 contacts NADPH. Positions 277 and 279 each coordinate NADPH.

It belongs to the NAD-dependent glycerol-3-phosphate dehydrogenase family.

It localises to the cytoplasm. It carries out the reaction sn-glycerol 3-phosphate + NAD(+) = dihydroxyacetone phosphate + NADH + H(+). It catalyses the reaction sn-glycerol 3-phosphate + NADP(+) = dihydroxyacetone phosphate + NADPH + H(+). The protein operates within membrane lipid metabolism; glycerophospholipid metabolism. Its function is as follows. Catalyzes the reduction of the glycolytic intermediate dihydroxyacetone phosphate (DHAP) to sn-glycerol 3-phosphate (G3P), the key precursor for phospholipid synthesis. The protein is Glycerol-3-phosphate dehydrogenase [NAD(P)+] of Janthinobacterium sp. (strain Marseille) (Minibacterium massiliensis).